The chain runs to 403 residues: G-protein coupled receptor family C group 5 member B (403 aa).

A signal peptide spans 1–28 (MFVASERKMRAHQVLTFLLLFVITSVAS). Residues 29–56 (ENASTSRGCGLDLLPQYVSLCDLDAIWG) are Extracellular-facing. Residue N30 is glycosylated (N-linked (GlcNAc...) asparagine). A helical membrane pass occupies residues 57-77 (IVVEAVAGAGALITLLLMLIL). Residues 78 to 94 (LVRLPFIKEKEKKSPVG) are Cytoplasmic-facing. Residues 95–115 (LHFLFLLGTLGLFGLTFAFII) form a helical membrane-spanning segment. The Extracellular segment spans residues 116–126 (QEDETICSVRR). A helical membrane pass occupies residues 127–147 (FLWGVLFALCFSCLLSQAWRV). At 148 to 162 (RRLVRHGTGPAGWQL) the chain is on the cytoplasmic side. The chain crosses the membrane as a helical span at residues 163-183 (VGLALCLMLVQVIIAVEWLVL). Over 184-199 (TVLRDTRPACAYEPMD) the chain is Extracellular. Residues 200–220 (FVMALIYDMVLLVVTLGLALF) traverse the membrane as a helical segment. Over 221–234 (TLCGKFKRWKLNGA) the chain is Cytoplasmic. Residues 235–255 (FLLITAFLSVLIWVAWMTMYL) form a helical membrane-spanning segment. The Extracellular segment spans residues 256 to 271 (FGNVKLQQGDAWNDPT). A helical transmembrane segment spans residues 272–292 (LAITLAASGWVFVIFHAIPEI). The Cytoplasmic portion of the chain corresponds to 293–403 (HCTLLPALQE…PPSHTGRHLW (111 aa)). Residues 349-371 (GFPNGSLGKRPSGSLGKRPSAPF) form a disordered region. S354 is subject to Phosphoserine.

This sequence belongs to the G-protein coupled receptor 3 family. Expression is high in kidney, pancreas, and testis, medium in brain, heart, prostate, small intestine, and spleen, low in liver, placenta, skeletal muscle, colon, ovary, and thymus, and not detectable in lung and peripheral leukocyte. According to PubMed:10945465, highly expressed in most brain areas examined, with the highest levels observed in corpus callosum, caudate nucleus, putamen, substantia nigra, thalamus, hippocampus, and spinal cord as well as in dorsal root ganglia (DRG). Expressed in glia limitans, ependymal cells, astrocyte cell bodies, the perivascular region in astrocyte endfeet, but not in neurons. In the periphery, expression levels are relatively low, compared to the CNS, with the strongest expression detected in pancreas, testis, uterus, and stomach.

The protein localises to the cell membrane. It is found in the cytoplasmic vesicle membrane. In terms of biological role, G-protein coupled receptor involved in the regulation of cell volume. The sequence is that of G-protein coupled receptor family C group 5 member B (GPRC5B) from Homo sapiens (Human).